The primary structure comprises 83 residues: Probable insulin-like peptide alpha-type 2 (83 aa).

A signal peptide spans 1–21 (MHTTTILICFFIFLVQVSTMD). 3 disulfides stabilise this stretch: Cys-32–Cys-66, Cys-44–Cys-79, and Cys-54–Cys-80.

The protein belongs to the insulin family.

The protein resides in the secreted. The polypeptide is Probable insulin-like peptide alpha-type 2 (ins-22) (Caenorhabditis elegans).